The chain runs to 233 residues: Purine nucleoside phosphorylase DeoD-type (233 aa).

His-4 contacts a purine D-ribonucleoside. Phosphate contacts are provided by residues Gly-20, Arg-24, Arg-43, and 87–90; that span reads RIGT. Residues 179 to 181 and 203 to 204 contribute to the a purine D-ribonucleoside site; these read EME and SD. The active-site Proton donor is the Asp-204.

The protein belongs to the PNP/UDP phosphorylase family. In terms of assembly, homohexamer; trimer of homodimers.

It carries out the reaction a purine D-ribonucleoside + phosphate = a purine nucleobase + alpha-D-ribose 1-phosphate. It catalyses the reaction a purine 2'-deoxy-D-ribonucleoside + phosphate = a purine nucleobase + 2-deoxy-alpha-D-ribose 1-phosphate. Functionally, catalyzes the reversible phosphorolytic breakdown of the N-glycosidic bond in the beta-(deoxy)ribonucleoside molecules, with the formation of the corresponding free purine bases and pentose-1-phosphate. The sequence is that of Purine nucleoside phosphorylase DeoD-type from Helicobacter pylori (strain ATCC 700392 / 26695) (Campylobacter pylori).